Consider the following 1317-residue polypeptide: Immunoglobulin superfamily member 1 (1317 aa).

The signal sequence occupies residues 1 to 20; it reads MMLRTFTLLLLCIWLNPGMT. 5 Ig-like C2-type domains span residues 21–112, 114–211, 216–302, 311–398, and 400–481; these read SLAV…KILE, EAPG…KLVV, PKPT…SDIL, PKTW…ATYN, and VELM…HRSK. Residues 21–499 lie on the Extracellular side of the membrane; the sequence is SLAVESQPEL…GFLTWNSILN (479 aa). Asn-43 carries N-linked (GlcNAc...) asparagine glycosylation. Residues Cys-48 and Cys-96 are joined by a disulfide bond. Cysteines 238 and 286 form a disulfide. N-linked (GlcNAc...) asparagine glycosylation is found at Asn-328 and Asn-371. Disulfide bonds link Cys-333–Cys-382 and Cys-422–Cys-465. The chain crosses the membrane as a helical span at residues 500–520; sequence EAVRVSLTMQLASLLLLVVWI. Over 521 to 531 the chain is Cytoplasmic; that stretch reads RWKCRRLRLRE. Residues 532–552 form a helical membrane-spanning segment; the sequence is AWLLGTAQGVAMLFILMALLC. At 553-1317 the chain is on the extracellular side; that stretch reads CGLCNGALTE…EVSVELTVPI (765 aa). Ig-like C2-type domains are found at residues 570–658, 659–753, 758–850, 854–938, 946–1041, 1046–1131, and 1142–1223; these read TPKP…ALEL, VGTD…ELVI, PKPF…LVVT, PKPT…SSLS, TDTF…ELIV, PKPS…NHSN, and PKPS…EPSD. A disulfide bond links Cys-780 and Cys-830. The N-linked (GlcNAc...) asparagine glycan is linked to Asn-871. A disulfide bridge connects residues Cys-876 and Cys-923. N-linked (GlcNAc...) asparagine glycans are attached at residues Asn-967 and Asn-1063. Intrachain disulfides connect Cys-1068/Cys-1115 and Cys-1164/Cys-1207. The segment at 1290-1310 is disordered; it reads NQEGEPGTTTNSPSSASQEVS. A compositionally biased stretch (polar residues) spans 1296–1309; sequence GTTTNSPSSASQEV.

Interacts with INHA; the interaction is not confirmed by standard receptor binding assays. Interacts with ACVR1B; the interaction appears to be ligand-dependent as it is diminished by inhibin B and activin A. Interacts with ACVR2A, ACVR2B, ACVRL1 and BMPR1B. Interacts with HECTD1.

The protein localises to the membrane. The protein resides in the secreted. Its function is as follows. Seems to be a coreceptor in inhibin signaling, but seems not to be a high-affinity inhibin receptor. Antagonizes activin A signaling in the presence or absence of inhibin B. Necessary to mediate a specific antagonistic effect of inhibin B on activin-stimulated transcription. This Mus musculus (Mouse) protein is Immunoglobulin superfamily member 1 (Igsf1).